The primary structure comprises 86 residues: Anti-adapter protein IraP (86 aa).

Residues 1 to 36 (MKNLIAELLFKLAQKEEESKELCAQVEALEIIVTAM) adopt a coiled-coil conformation.

The protein belongs to the IraP family. As to quaternary structure, interacts with RssB.

Its subcellular location is the cytoplasm. Inhibits RpoS proteolysis by regulating RssB activity, thereby increasing the stability of the sigma stress factor RpoS especially during phosphate starvation, but also in stationary phase and during nitrogen starvation. Its effect on RpoS stability is due to its interaction with RssB, which probably blocks the interaction of RssB with RpoS, and the consequent delivery of the RssB-RpoS complex to the ClpXP protein degradation pathway. The sequence is that of Anti-adapter protein IraP from Escherichia coli (strain SE11).